The primary structure comprises 359 residues: 4-hydroxy-3-methylbut-2-en-1-yl diphosphate synthase (flavodoxin) (359 aa).

Residues Cys-264, Cys-267, Cys-299, and Glu-306 each coordinate [4Fe-4S] cluster.

Belongs to the IspG family. [4Fe-4S] cluster serves as cofactor.

The catalysed reaction is (2E)-4-hydroxy-3-methylbut-2-enyl diphosphate + oxidized [flavodoxin] + H2O + 2 H(+) = 2-C-methyl-D-erythritol 2,4-cyclic diphosphate + reduced [flavodoxin]. Its pathway is isoprenoid biosynthesis; isopentenyl diphosphate biosynthesis via DXP pathway; isopentenyl diphosphate from 1-deoxy-D-xylulose 5-phosphate: step 5/6. Its function is as follows. Converts 2C-methyl-D-erythritol 2,4-cyclodiphosphate (ME-2,4cPP) into 1-hydroxy-2-methyl-2-(E)-butenyl 4-diphosphate. The chain is 4-hydroxy-3-methylbut-2-en-1-yl diphosphate synthase (flavodoxin) from Helicobacter pylori (strain P12).